Consider the following 201-residue polypeptide: LexA repressor (201 aa).

The segment at residues 29–49 (VREICKAVGLSSTSSVHFHLK) is a DNA-binding region (H-T-H motif). Active-site for autocatalytic cleavage activity residues include Ser125 and Lys162.

The protein belongs to the peptidase S24 family. Homodimer.

It catalyses the reaction Hydrolysis of Ala-|-Gly bond in repressor LexA.. Its function is as follows. Represses a number of genes involved in the response to DNA damage (SOS response), including recA and lexA. In the presence of single-stranded DNA, RecA interacts with LexA causing an autocatalytic cleavage which disrupts the DNA-binding part of LexA, leading to derepression of the SOS regulon and eventually DNA repair. This Clostridium botulinum (strain ATCC 19397 / Type A) protein is LexA repressor.